A 605-amino-acid polypeptide reads, in one-letter code: Class II receptor tyrosine kinase (605 aa).

Residues 1–67 (MWSSPGRNLE…DGESASFRVD (67 aa)) enclose the Ig-like C2-type domain. The Extracellular portion of the chain corresponds to 1–84 (MWSSPGRNLE…GSNSGVIAGV (84 aa)). Asn26, Asn44, and Asn72 each carry an N-linked (GlcNAc...) asparagine glycan. The chain crosses the membrane as a helical span at residues 85–105 (LITLLLLIALIIILICVFWVV). The Cytoplasmic segment spans residues 106-605 (WRYRRRGKFD…GRPRGVAGCV (500 aa)). The tract at residues 209-230 (EELSPIQEKPTRRNTGLSTYSQ) is disordered. The segment covering 221–230 (RNTGLSTYSQ) has biased composition (polar residues). Residues 346–605 (IREVKQIGVG…GRPRGVAGCV (260 aa)) form the Protein kinase domain. ATP contacts are provided by residues 352-360 (IGVGQFGAV) and Lys393. Residue Asp496 is the Proton acceptor of the active site. Tyr527 bears the Phosphotyrosine; by autocatalysis mark.

The protein belongs to the protein kinase superfamily. Tyr protein kinase family. Insulin receptor subfamily. In terms of processing, phosphorylated.

The protein localises to the cell membrane. The catalysed reaction is L-tyrosyl-[protein] + ATP = O-phospho-L-tyrosyl-[protein] + ADP + H(+). This is Class II receptor tyrosine kinase (TK) from Geodia cydonium (Sponge).